Reading from the N-terminus, the 60-residue chain is Large ribosomal subunit protein bL32 (60 aa).

It belongs to the bacterial ribosomal protein bL32 family.

This chain is Large ribosomal subunit protein bL32, found in Pediococcus pentosaceus (strain ATCC 25745 / CCUG 21536 / LMG 10740 / 183-1w).